We begin with the raw amino-acid sequence, 664 residues long: NAD(P)H-quinone oxidoreductase chain 5 (664 aa).

16 consecutive transmembrane segments (helical) span residues 7 to 27 (YAWLIPVLPLLGAMVIGIGLI), 39 to 59 (LNAVFVLSLIGTSMALSFGLL), 91 to 111 (HLSALMSVIVTTVALLVMIYT), 120 to 140 (GYVRFYAYLSIFSSSMLGLVF), 144 to 164 (LVQVYIFWELVGMCSYLLIGF), 187 to 207 (FGLLLGMLGLYWATGSFEFDL), 219 to 239 (GQISSLLAIVFAVLVFLGPVA), 258 to 278 (TPISALIHAATMVAAGVFLVA), 290 to 310 (AMNVIAWTGATTAFLGATIAL), 327 to 347 (LGYMVMAMGIGGYTAGLFHLM), 352 to 372 (FKAMLFLGSGSVIHGMEEVVG), 395 to 415 (ATTFLIGTLAICGIPPFAGFW), 420 to 440 (ILGLAFEANPVLWFIGWATAG), 495 to 515 (FPLMALAVPSVLIGLLGVPWG), 541 to 561 (FLIMGGNSVGIALIGITIASL), and 643 to 663 (VQFYALIVFGAVLGFVIFFSV).

This sequence belongs to the complex I subunit 5 family.

The protein localises to the cell membrane. It carries out the reaction a plastoquinone + NADH + (n+1) H(+)(in) = a plastoquinol + NAD(+) + n H(+)(out). The catalysed reaction is a plastoquinone + NADPH + (n+1) H(+)(in) = a plastoquinol + NADP(+) + n H(+)(out). Functionally, NDH-1 shuttles electrons from NAD(P)H, via FMN and iron-sulfur (Fe-S) centers, to quinones in the respiratory chain. The immediate electron acceptor for the enzyme in this species is believed to be plastoquinone. Couples the redox reaction to proton translocation (for every two electrons transferred, four hydrogen ions are translocated across the cytoplasmic membrane), and thus conserves the redox energy in a proton gradient. The sequence is that of NAD(P)H-quinone oxidoreductase chain 5 (ndhF) from Picosynechococcus sp. (strain ATCC 27264 / PCC 7002 / PR-6) (Agmenellum quadruplicatum).